The following is a 502-amino-acid chain: Hexose transporter 1 (502 aa).

Topologically, residues 1–26 (MKKSSKEISSSQSLKNGGSDHFFNTS) are cytoplasmic. A helical membrane pass occupies residues 27–47 (LMYVLAACLASFIFGYQVSVL). Topologically, residues 48-76 (NTIKNFIVIEFGWCTGNKVECDDSTLKSS) are extracellular. C61 and C68 are disulfide-bonded. A helical membrane pass occupies residues 77–97 (FLLASVFIGAVVGSGFSGYLV). At 98-102 (QHGRR) the chain is on the cytoplasmic side. A helical transmembrane segment spans residues 103 to 123 (FSLLVIYNFFILVSILTSITH). Over 124 to 132 (HFHTILFSR) the chain is Extracellular. A helical transmembrane segment spans residues 133–153 (LLSGFGIGLITVSVPMYISEM). Residues 154–163 (THKDKKGAYG) lie on the Cytoplasmic side of the membrane. Residues 164–184 (VLHQLFITFGIFVAVLLGMAM) form a helical membrane-spanning segment. Position 167 (Q167) interacts with alpha-D-glucose. Beta-D-glucose is bound at residue Q167. Residues 185–205 (GEAPDAKSVDALGEFQKIWWR) lie on the Extracellular side of the membrane. The helical transmembrane segment at 206–226 (LMFFFPCLISILGIVLLTFFY) threads the bilayer. At 227–291 (KEETPYYLFE…RAMQIPSYRN (65 aa)) the chain is on the cytoplasmic side. Residues 292–312 (VILLGCILSGLQQFTGINVLV) form a helical membrane-spanning segment. Alpha-D-glucose-binding residues include Q303, Q304, and N309. Q303 contributes to the beta-D-glucose binding site. A beta-D-glucose-binding site is contributed by N309. The Extracellular portion of the chain corresponds to 313–329 (SNSNELYKEFLSNKLIT). A helical membrane pass occupies residues 330 to 350 (TLSVIMTVVNFLMTFPAIYIV). N339 lines the beta-D-glucose pocket. The Cytoplasmic portion of the chain corresponds to 351–356 (EKLGRK). A helical transmembrane segment spans residues 357–377 (TLLLCGCAGVICAFLPTAIAN). At 378–390 (QIDSTSAFVKNLS) the chain is on the extracellular side. The helical transmembrane segment at 391 to 411 (IAATFVMIISFAVSYGPVLWI) threads the bilayer. Position 410 (W410) interacts with alpha-D-glucose. Residues 412 to 427 (YLHEMFPSEIKDSAAS) lie on the Cytoplasmic side of the membrane. Residues 428-448 (LASLVNWVCAIIVVFPSDIII) traverse the membrane as a helical segment. Residues 449-453 (KKSPT) lie on the Extracellular side of the membrane. Residues 454-474 (ILFFIFSGMSILSFLFIFFFI) form a helical membrane-spanning segment. Topologically, residues 475 to 502 (KETKGGEIGTSPYITMEERQKHMGKSAV) are cytoplasmic.

It belongs to the major facilitator superfamily. Sugar transporter (TC 2.A.1.1) family. Homodimer.

It localises to the cell membrane. It carries out the reaction D-glucose(out) = D-glucose(in). It catalyses the reaction D-fructose(out) = D-fructose(in). The enzyme catalyses D-galactose(in) = D-galactose(out). The catalysed reaction is D-mannose(out) = D-mannose(in). It carries out the reaction D-glucosamine(out) = D-glucosamine(in). It catalyses the reaction D-xylose(out) = D-xylose(in). Inhibited by compound 3361 (3-O-((undec-10-en)-1-yl)-D-glucose). Functionally, sodium-independent facilitative hexose transporter. Can transport D-glucose and D-fructose. Can transport D-mannose, D-galactose, D-xylose and D-glucosamine. The chain is Hexose transporter 1 from Plasmodium vivax (strain Brazil I).